Consider the following 180-residue polypeptide: Large ribosomal subunit protein mL41 (180 aa).

The N-terminal 21 residues, 1–21 (MKLVLVSTRGVRSLNSTNFPA), are a transit peptide targeting the mitochondrion.

The protein belongs to the mitochondrion-specific ribosomal protein mL41 family. In terms of assembly, component of the mitochondrial ribosome large subunit (39S) which comprises a 16S rRNA and about 50 distinct proteins.

It is found in the mitochondrion. This Caenorhabditis elegans protein is Large ribosomal subunit protein mL41 (mrpl-41).